The chain runs to 421 residues: Signal recognition particle receptor FtsY (421 aa).

GTP is bound by residues 228–235 (GINGAGKT), 309–313 (DTAGR), and 373–376 (TKLD).

Belongs to the GTP-binding SRP family. FtsY subfamily. As to quaternary structure, part of the signal recognition particle protein translocation system, which is composed of SRP and FtsY. SRP is a ribonucleoprotein composed of Ffh and a 4.5S RNA molecule.

Its subcellular location is the cell inner membrane. The protein resides in the cytoplasm. It carries out the reaction GTP + H2O = GDP + phosphate + H(+). Functionally, involved in targeting and insertion of nascent membrane proteins into the cytoplasmic membrane. Acts as a receptor for the complex formed by the signal recognition particle (SRP) and the ribosome-nascent chain (RNC). Interaction with SRP-RNC leads to the transfer of the RNC complex to the Sec translocase for insertion into the membrane, the hydrolysis of GTP by both Ffh and FtsY, and the dissociation of the SRP-FtsY complex into the individual components. The protein is Signal recognition particle receptor FtsY of Neisseria meningitidis serogroup B (strain ATCC BAA-335 / MC58).